The chain runs to 209 residues: MSIGILGTKLGMTQIFDEAGNAIPVTIIQAGPCPITQIKTTATDGYNAIQVGYRETKEKNLTKAQLGHLQKTNNSALRVLQEFSIESSDSIEVEKPITVELFNDNDIVNIQGYSIGRGFSGYQKRHNFARGPMSHGSKNHRLPGSIGAGSTPGRVYPGTRMAGRKGDSKITIRGLKIVKVDSERSLLIVKGSVPGKPGGLLTITQVKKV.

The interval 132 to 154 (PMSHGSKNHRLPGSIGAGSTPGR) is disordered.

It belongs to the universal ribosomal protein uL3 family. Part of the 50S ribosomal subunit.

The protein resides in the plastid. The protein localises to the cyanelle. Functionally, one of the primary rRNA binding proteins, it binds directly near the 3'-end of the 23S rRNA, where it nucleates assembly of the 50S subunit. This is Large ribosomal subunit protein uL3c (rpl3) from Cyanophora paradoxa.